A 247-amino-acid chain; its full sequence is Sugar fermentation stimulation protein homolog (247 aa).

This sequence belongs to the SfsA family.

This chain is Sugar fermentation stimulation protein homolog, found in Aeromonas salmonicida (strain A449).